The sequence spans 245 residues: Complement C1q subcomponent subunit A (245 aa).

The first 22 residues, 1–22 (MEGPRGWLVLCVLAISLASMVT), serve as a signal peptide directing secretion. The segment covering 27-38 (RAPDGKKGEAGR) has biased composition (basic and acidic residues). The segment at 27-114 (RAPDGKKGEA…SPGNIKDQPR (88 aa)) is disordered. The region spanning 31-109 (GKKGEAGRPG…KGTKGSPGNI (79 aa)) is the Collagen-like domain. Residue K33 is modified to 5-hydroxylysine. K33 carries an O-linked (Gal...) hydroxylysine glycan. Residues P39 and P45 each carry the 4-hydroxyproline modification. 5-hydroxylysine is present on K48. Residue K48 is glycosylated (O-linked (Gal...) hydroxylysine). Residues P54 and P57 each carry the 4-hydroxyproline modification. 5-hydroxylysine is present on K67. Residue K67 is glycosylated (O-linked (Gal...) hydroxylysine). 4-hydroxyproline is present on residues P73, P79, and P85. The residue at position 100 (K100) is a 5-hydroxylysine. K100 carries O-linked (Gal...) hydroxylysine glycosylation. In terms of domain architecture, C1q spans 110-245 (KDQPRPAFSA…FSGFLIFPSA (136 aa)). An N-linked (GlcNAc...) asparagine glycan is attached at N146. A disulfide bridge connects residues C172 and C190. Q199 lines the Ca(2+) pocket.

As to quaternary structure, core component of the complement C1 complex, a calcium-dependent complex composed of 1 molecule of the C1Q subcomplex, 2 molecules of C1R and 2 molecules of C1S. The C1Q subcomplex is composed 18 subunits: 3 chains of C1QA, C1QB, and C1QC trimerize to form 6 collagen-like triple helices connected to six globular ligand-recognition modules (C1q domain). Interacts with CR1 (via Sushi 24 and Sushi 25 domains). Interacts (via C-terminus) with CD33; this interaction activates CD33 inhibitory motifs. (Microbial infection) Interacts with Staphylococcus aureus protein Cna; this interaction results in the inhibition of the classical complement pathway. In terms of processing, O-linked glycans are assumed to be the Glc-Gal disaccharides typically found as secondary modifications of hydroxylated lysines in collagen-like domains.

It localises to the secreted. The protein localises to the cell surface. With respect to regulation, the C1Q subcomplex is inhibited by sulfated molecules, such as triterpenoid sulfates, heparan sulfate, or chondroitin sulfates. Its function is as follows. Core component of the complement C1 complex, a multiprotein complex that initiates the classical pathway of the complement system, a cascade of proteins that leads to phagocytosis and breakdown of pathogens and signaling that strengthens the adaptive immune system. The classical complement pathway is initiated by the C1Q subcomplex of the C1 complex, which specifically binds IgG or IgM immunoglobulins complexed with antigens, forming antigen-antibody complexes on the surface of pathogens: C1QA, together with C1QB and C1QC, specifically recognizes and binds the Fc regions of IgG or IgM via its C1q domain. Immunoglobulin-binding activates the proenzyme C1R, which cleaves C1S, initiating the proteolytic cascade of the complement system. The C1Q subcomplex is activated by a hexamer of IgG complexed with antigens, while it is activated by a pentameric IgM. The C1Q subcomplex also recognizes and binds phosphatidylserine exposed on the surface of cells undergoing programmed cell death, possibly promoting activation of the complement system. The chain is Complement C1q subcomponent subunit A from Homo sapiens (Human).